The sequence spans 607 residues: MTVAPPSPNSPAAELQQRPPRYPGEDTTPTSKREIWGWYAYGIAAEVFAVCGVGSFLPLTLEQLAREQGTFKSSHLPCVGPGSPSTSVNGTAPAMLRRDEAENDQCVVGLLGLNINTASFAMYTFSLAVLVQALTLISFSALADYENNRKTLLLAFGFIGSATSMLFVFIAPPIFVLGALLVVIGVTCLGSSFVVLNSFLPVLVANDPSIEKASKPAEELHPMSPDGEYIHPRDSFSASDAESGPHPAAEAGSGTSSGPASPELQLSTRISSKGVGLGYCAAVLVQILSISLLFTLSKTSISKVSGTLPLRFVLLLVGIWWFSFTMVTRKWLRARPGPPLNTANTGGQVKRWRVWLRLVGFAWKSLWKTVKIAVQLREVLVFLAAWFLLSDAMATVSGTAILFARTELKMSTTLVGLLSITATLSGMAGAFLWPVVSRRFGLKSNHTIMLCIALFEIIPLYGMLAYIPVFKKWGVIGLQQPWEIFPLAIVHGVVSGGLSSYCRSFFGLLIPPGSEAAFYALYAATDKGSSVIGPAIVGMLIDATGQVRSGFFFIAPLILMPIPLIWIVNAEKGRREGVAMAQRLEKGHETEMSEQTEEAEGLLARGI.

The segment at 1–29 is disordered; sequence MTVAPPSPNSPAAELQQRPPRYPGEDTTP. Residues 41–61 form a helical membrane-spanning segment; sequence YGIAAEVFAVCGVGSFLPLTL. Asparagine 89 carries an N-linked (GlcNAc...) asparagine glycan. The next 3 membrane-spanning stretches (helical) occupy residues 119–139, 151–170, and 188–208; these read SFAM…LISF, TLLL…FVFI, and CLGS…ANDP. The segment at 235–263 is disordered; that stretch reads SFSASDAESGPHPAAEAGSGTSSGPASPE. Residues 247-263 show a composition bias toward low complexity; it reads PAAEAGSGTSSGPASPE. A run of 4 helical transmembrane segments spans residues 274-294, 307-327, 379-399, and 415-435; these read GVGL…SLLF, TLPL…FTMV, VLVF…VSGT, and VGLL…LWPV. Asparagine 445 carries an N-linked (GlcNAc...) asparagine glycan. Transmembrane regions (helical) follow at residues 450-470, 485-507, 519-541, and 550-570; these read LCIA…IPVF, FPLA…SFFG, YALY…GMLI, and GFFF…IVNA. The disordered stretch occupies residues 586–607; the sequence is KGHETEMSEQTEEAEGLLARGI.

It belongs to the ATG22 family.

It localises to the vacuole membrane. Its function is as follows. Vacuolar effluxer which mediate the efflux of amino acids resulting from autophagic degradation. The release of autophagic amino acids allows the maintenance of protein synthesis and viability during nitrogen starvation. The sequence is that of Autophagy-related protein 22-2 (atg22-2) from Aspergillus oryzae (strain ATCC 42149 / RIB 40) (Yellow koji mold).